The sequence spans 375 residues: Phytanoyl-CoA hydroxylase-interacting protein-like (375 aa).

A phosphoserine mark is found at Ser-11, Ser-12, and Ser-15. An N-linked (GlcNAc...) asparagine glycan is attached at Asn-22. Residue Ser-24 is modified to Phosphoserine. Asn-36 carries N-linked (GlcNAc...) asparagine glycosylation. One can recognise a Fibronectin type-III domain in the interval 51–160 (VPHNIKINNI…EIIEFCTADY (110 aa)).

Belongs to the PHYHIP family.

Its function is as follows. May play a role in the development of the central system. This is Phytanoyl-CoA hydroxylase-interacting protein-like (Phyhipl) from Mus musculus (Mouse).